We begin with the raw amino-acid sequence, 376 residues long: Queuine tRNA-ribosyltransferase (376 aa).

Residue Asp93 is the Proton acceptor of the active site. Residues 93–97, Asp147, Gln190, and Gly217 each bind substrate; that span reads DSGGF. Residues 248 to 254 form an RNA binding region; sequence GVGTPDD. The active-site Nucleophile is Asp267. The interval 272 to 276 is RNA binding; important for wobble base 34 recognition; sequence TRSGR.

The protein belongs to the queuine tRNA-ribosyltransferase family. As to quaternary structure, homodimer. Within each dimer, one monomer is responsible for RNA recognition and catalysis, while the other monomer binds to the replacement base PreQ1.

It catalyses the reaction 7-aminomethyl-7-carbaguanine + guanosine(34) in tRNA = 7-aminomethyl-7-carbaguanosine(34) in tRNA + guanine. It participates in tRNA modification; tRNA-queuosine biosynthesis. Functionally, catalyzes the base-exchange of a guanine (G) residue with the queuine precursor 7-aminomethyl-7-deazaguanine (PreQ1) at position 34 (anticodon wobble position) in tRNAs with GU(N) anticodons (tRNA-Asp, -Asn, -His and -Tyr). Catalysis occurs through a double-displacement mechanism. The nucleophile active site attacks the C1' of nucleotide 34 to detach the guanine base from the RNA, forming a covalent enzyme-RNA intermediate. The proton acceptor active site deprotonates the incoming PreQ1, allowing a nucleophilic attack on the C1' of the ribose to form the product. After dissociation, two additional enzymatic reactions on the tRNA convert PreQ1 to queuine (Q), resulting in the hypermodified nucleoside queuosine (7-(((4,5-cis-dihydroxy-2-cyclopenten-1-yl)amino)methyl)-7-deazaguanosine). This Agrobacterium fabrum (strain C58 / ATCC 33970) (Agrobacterium tumefaciens (strain C58)) protein is Queuine tRNA-ribosyltransferase.